The chain runs to 169 residues: Diuretic hormone 44 (169 aa).

A signal peptide spans 1–18 (MILLGILASTTIIGLTSS). A propeptide spanning residues 19–96 (APLSSYERRD…ARRKQERDQR (78 aa)) is cleaved from the precursor. The stretch at 83–108 (MLELARRKQERDQRQIEENRRFLENI) forms a coiled coil. Glutamine 97 bears the Pyrrolidone carboxylic acid mark. Isoleucine 108 carries the isoleucine amide modification. Positions 109–169 (GKRSVPVSDA…RVQANELRLL (61 aa)) are excised as a propeptide.

In terms of processing, residues Ile-66 to Gly-109 may constitute another form of the DH44 peptide, which has not been detected yet. Expressed in brain, ventral ganglia and the retrocerebral complex (at protein level).

Its subcellular location is the secreted. In terms of biological role, regulation of fluid secretion. This is Diuretic hormone 44 from Camponotus floridanus (Florida carpenter ant).